Reading from the N-terminus, the 220-residue chain is 1-Cys peroxiredoxin B (220 aa).

One can recognise a Thioredoxin domain in the interval 4 to 165; the sequence is LTLGDVVPDL…VLRATDALLT (162 aa). Cys46 serves as the catalytic Cysteine sulfenic acid (-SOH) intermediate. Residues 195 to 218 carry the Bipartite nuclear localization signal motif; sequence KARFPAGFETAQLPSNKCYLRFTQ.

The protein belongs to the peroxiredoxin family. Prx6 subfamily.

It is found in the nucleus. The protein resides in the cytoplasm. It catalyses the reaction a hydroperoxide + [thioredoxin]-dithiol = an alcohol + [thioredoxin]-disulfide + H2O. Functionally, thiol-specific peroxidase that catalyzes the reduction of hydrogen peroxide and organic hydroperoxides to water and alcohols, respectively. Seems to contribute to the inhibition of germination during stress. This chain is 1-Cys peroxiredoxin B, found in Oryza sativa subsp. indica (Rice).